The chain runs to 195 residues: Peroxiredoxin bcp1 (195 aa).

The 123-residue stretch at 46 to 168 (IQVGDVIPDI…SHWIFEKGTG (123 aa)) folds into the Thioredoxin domain. Cys-89 serves as the catalytic Cysteine sulfenic acid (-SOH) intermediate. An intrachain disulfide couples Cys-89 to Cys-94.

The protein belongs to the peroxiredoxin family. BCP/PrxQ subfamily. Monomer. Post-translationally, the active site is a conserved redox-active cysteine residue, the peroxidatic cysteine (C(P)), which makes the nucleophilic attack on the peroxide substrate. The peroxide oxidizes the C(P)-SH to cysteine sulfenic acid (C(P)-SOH), which then reacts with another cysteine residue, the resolving cysteine (C(R)), to form a disulfide bridge. The disulfide is subsequently reduced by an appropriate electron donor to complete the catalytic cycle. In this atypical 2-Cys peroxiredoxin, C(R) is present in the same subunit to form an intramolecular disulfide. The disulfide is subsequently reduced by thioredoxin.

The protein resides in the cytoplasm. It is found in the nucleus. The enzyme catalyses a hydroperoxide + [thioredoxin]-dithiol = an alcohol + [thioredoxin]-disulfide + H2O. Its function is as follows. Thiol-specific peroxidase that catalyzes the reduction of hydrogen peroxide and organic hydroperoxides to water and alcohols, respectively. Plays a role in cell protection against oxidative stress by detoxifying peroxides and as sensor of hydrogen peroxide-mediated signaling events. Acts as a scavenger of H(2)O(2). The chain is Peroxiredoxin bcp1 (bcp1) from Schizosaccharomyces pombe (strain 972 / ATCC 24843) (Fission yeast).